The chain runs to 136 residues: uncharacterized protein (136 aa).

The chain crosses the membrane as a helical span at residues 19–39 (LGFPLGTALLLIIIFSLSGIF). Disordered regions lie at residues 54-87 (SLANGRPSADIESNPYKPKPPFPEMKKPQNLSVP) and 112-136 (KLTVDVQTPPQSPPVKPARFPVPLY).

It is found in the membrane. This is an uncharacterized protein from Arabidopsis thaliana (Mouse-ear cress).